The chain runs to 196 residues: Alpha-crystallin A chain (196 aa).

Methionine 1 is subject to N-acetylmethionine. The interval 1–63 is required for complex formation with BFSP1 and BFSP2; the sequence is MDVTIQHPWF…RTVLDSGISE (63 aa). At glutamine 6 the chain carries Deamidated glutamine; partial. A Phosphoserine modification is found at serine 45. Glutamine 50 is subject to Deamidated glutamine; partial. A sHSP domain is found at 76–185; it reads HAGNPKNNPV…GHSERAIPVS (110 aa). N6-acetyllysine occurs at positions 93 and 122. Histidine 123 is a Zn(2+) binding site. At asparagine 124 the chain carries Deamidated asparagine; partial. Residues glutamate 125 and histidine 130 each contribute to the Zn(2+) site. Serine 145 bears the Phosphoserine mark. Asparagine 146 carries the post-translational modification Deamidated asparagine; partial. Positions 168 to 196 are disordered; that stretch reads KVQSGLDAGHSERAIPVSREEKPSSAPSS. A Deamidated glutamine; partial modification is found at glutamine 170. The segment covering 176–190 has biased composition (basic and acidic residues); that stretch reads GHSERAIPVSREEKP. Residue histidine 177 participates in Zn(2+) binding. O-linked (GlcNAc) serine glycosylation occurs at serine 185.

This sequence belongs to the small heat shock protein (HSP20) family. Heteropolymer composed of three CRYAA and one CRYAB subunits. Inter-subunit bridging via zinc ions enhances stability, which is crucial as there is no protein turn over in the lens. Can also form homodimers and homotetramers (dimers of dimers) which serve as the building blocks of homooligomers. Within homooligomers, the zinc-binding motif is created from residues of 3 different molecules. His-123 and Glu-125 from one molecule are ligands of the zinc ion, and His-130 and His-177 residues from additional molecules complete the site with tetrahedral coordination geometry. Part of a complex required for lens intermediate filament formation composed of BFSP1, BFSP2 and CRYAA. In terms of processing, acetylation at Lys-93 may increase chaperone activity. Post-translationally, undergoes age-dependent proteolytical cleavage at the C-terminus.

It is found in the cytoplasm. The protein localises to the nucleus. In terms of biological role, contributes to the transparency and refractive index of the lens. Acts as a chaperone, preventing aggregation of various proteins under a wide range of stress conditions. Required for the correct formation of lens intermediate filaments as part of a complex composed of BFSP1, BFSP2 and CRYAA. The protein is Alpha-crystallin A chain (Cryaa) of Mus musculus (Mouse).